A 116-amino-acid polypeptide reads, in one-letter code: Fluoride-specific ion channel FluC 2 (116 aa).

The next 2 helical transmembrane spans lie at 3–23 (LLTALAVGAGGAAGAVARYAV) and 43–63 (LLFGVAIGADFGGAPAVAVTV). The Na(+) site is built by glycine 67 and threonine 70. The helical transmembrane segment at 96–116 (VGTLAAALLAVFLGIALGAAL) threads the bilayer.

Belongs to the fluoride channel Fluc/FEX (TC 1.A.43) family.

It localises to the cell membrane. The catalysed reaction is fluoride(in) = fluoride(out). Its activity is regulated as follows. Na(+) is not transported, but it plays an essential structural role and its presence is essential for fluoride channel function. In terms of biological role, fluoride-specific ion channel. Important for reducing fluoride concentration in the cell, thus reducing its toxicity. The protein is Fluoride-specific ion channel FluC 2 of Natronomonas pharaonis (strain ATCC 35678 / DSM 2160 / CIP 103997 / JCM 8858 / NBRC 14720 / NCIMB 2260 / Gabara) (Halobacterium pharaonis).